A 556-amino-acid polypeptide reads, in one-letter code: Formate--tetrahydrofolate ligase 1 (556 aa).

65-72 (TPAGEGKS) is an ATP binding site.

It belongs to the formate--tetrahydrofolate ligase family.

It carries out the reaction (6S)-5,6,7,8-tetrahydrofolate + formate + ATP = (6R)-10-formyltetrahydrofolate + ADP + phosphate. It participates in one-carbon metabolism; tetrahydrofolate interconversion. This chain is Formate--tetrahydrofolate ligase 1, found in Streptococcus pyogenes serotype M4 (strain MGAS10750).